We begin with the raw amino-acid sequence, 953 residues long: ALS2 C-terminal-like protein (953 aa).

8 MORN repeats span residues 358 to 380, 381 to 403, 409 to 431, 432 to 452, 459 to 479, 483 to 505, 506 to 528, and 529 to 552; these read YEGEWCRGRPHGKGTLKWPDGRN, HVGNFCQGLEHGFGIRLLPQASE, YKCHWREGSMCGYGICEYSTDEV, YKGYFQEGLRHGFGVLESGPQ, YTGHWERGQRSGYGIEEDGDR, YIGMWQAGQRHGPGVMVTQAGVC, YQGTFQADKTVGPGILLSEDDSL, and YEGTFTRDLTLMGKGKVTFPNGFT. Residues 796-942 form the VPS9 domain; the sequence is LFPDTQLLEF…IQKEDMRLHR (147 aa).

In terms of assembly, homodimer. Forms a heteromeric complex with ALS2. Interacts with ALS2 and RAB5A. Expressed in heart and kidney.

Its subcellular location is the cytoplasm. In terms of biological role, acts as a guanine nucleotide exchange factor (GEF) for Rab5 GTPase. Regulates the ALS2-mediated endosome dynamics. The chain is ALS2 C-terminal-like protein (ALS2CL) from Homo sapiens (Human).